Reading from the N-terminus, the 323-residue chain is Mediator of RNA polymerase II transcription subunit 4 (323 aa).

Residues Met-1 to Thr-36 form a disordered region. Polar residues predominate over residues Phe-11–Thr-36. Residues Met-79–Leu-167 are a coiled coil. 2 stretches are compositionally biased toward basic and acidic residues: residues His-241–His-262 and Asp-282–Gln-303. Positions His-241–Asp-323 are disordered.

The protein belongs to the Mediator complex subunit 4 family. In terms of assembly, component of the Mediator complex.

The protein resides in the nucleus. Its function is as follows. Component of the Mediator complex, a coactivator involved in the regulated transcription of nearly all RNA polymerase II-dependent genes. Mediator functions as a bridge to convey information from gene-specific regulatory proteins to the basal RNA polymerase II transcription machinery. Mediator is recruited to promoters by direct interactions with regulatory proteins and serves as a scaffold for the assembly of a functional preinitiation complex with RNA polymerase II and the general transcription factors. The polypeptide is Mediator of RNA polymerase II transcription subunit 4 (MED4) (Candida albicans (strain SC5314 / ATCC MYA-2876) (Yeast)).